The following is a 170-amino-acid chain: Shikimate kinase (170 aa).

Residue 11 to 16 (LSGKST) coordinates ATP. S15 serves as a coordination point for Mg(2+). Residues D33, R57, and G79 each coordinate substrate. R119 is a binding site for ATP. R137 lines the substrate pocket.

It belongs to the shikimate kinase family. Monomer. Requires Mg(2+) as cofactor.

It localises to the cytoplasm. It carries out the reaction shikimate + ATP = 3-phosphoshikimate + ADP + H(+). It participates in metabolic intermediate biosynthesis; chorismate biosynthesis; chorismate from D-erythrose 4-phosphate and phosphoenolpyruvate: step 5/7. Catalyzes the specific phosphorylation of the 3-hydroxyl group of shikimic acid using ATP as a cosubstrate. The protein is Shikimate kinase of Clostridium botulinum (strain Loch Maree / Type A3).